The chain runs to 460 residues: Proline--tRNA ligase (460 aa).

It belongs to the class-II aminoacyl-tRNA synthetase family. ProS type 3 subfamily. In terms of assembly, homodimer.

The protein resides in the cytoplasm. The catalysed reaction is tRNA(Pro) + L-proline + ATP = L-prolyl-tRNA(Pro) + AMP + diphosphate. Functionally, catalyzes the attachment of proline to tRNA(Pro) in a two-step reaction: proline is first activated by ATP to form Pro-AMP and then transferred to the acceptor end of tRNA(Pro). This Methanococcus maripaludis (strain C5 / ATCC BAA-1333) protein is Proline--tRNA ligase.